The primary structure comprises 100 residues: Defensin-like protein 316 (100 aa).

An N-terminal signal peptide occupies residues 1–18 (MASHIICYIFCIIKLSCA). 3 disulfides stabilise this stretch: cysteine 21/cysteine 84, cysteine 43/cysteine 64, and cysteine 53/cysteine 76.

The protein belongs to the DEFL family.

The protein resides in the secreted. This Arabidopsis thaliana (Mouse-ear cress) protein is Defensin-like protein 316.